A 476-amino-acid chain; its full sequence is Amidophosphoribosyltransferase (476 aa).

A propeptide spanning residues 1-11 is cleaved from the precursor; it reads MLAEIKGLNEE. The Nucleophile role is filled by Cys-12. The Glutamine amidotransferase type-2 domain maps to 12–231; the sequence is CGVFGIWGHE…PGEMLIINDE (220 aa). Cys-247 contacts [4Fe-4S] cluster. The Mg(2+) site is built by Ser-294, Asp-356, and Asp-357. Residues Cys-393, Cys-448, and Cys-451 each coordinate [4Fe-4S] cluster.

In the C-terminal section; belongs to the purine/pyrimidine phosphoribosyltransferase family. In terms of assembly, homotetramer. It depends on Mg(2+) as a cofactor. [4Fe-4S] cluster is required as a cofactor.

It catalyses the reaction 5-phospho-beta-D-ribosylamine + L-glutamate + diphosphate = 5-phospho-alpha-D-ribose 1-diphosphate + L-glutamine + H2O. It participates in purine metabolism; IMP biosynthesis via de novo pathway; N(1)-(5-phospho-D-ribosyl)glycinamide from 5-phospho-alpha-D-ribose 1-diphosphate: step 1/2. Its activity is regulated as follows. Allosterically regulated; subject to end product regulation by purine nucleotides. Its function is as follows. Catalyzes the formation of phosphoribosylamine from phosphoribosylpyrophosphate (PRPP) and glutamine. The protein is Amidophosphoribosyltransferase of Bacillus subtilis (strain 168).